The chain runs to 382 residues: 1-deoxy-D-xylulose 5-phosphate reductoisomerase (382 aa).

NADPH contacts are provided by Thr10, Gly11, Ser12, Ile13, Gly36, and Asn122. Lys123 lines the 1-deoxy-D-xylulose 5-phosphate pocket. Glu124 contacts NADPH. Residue Asp148 participates in Mn(2+) binding. Residues Ser149, Glu150, Ser174, and His197 each contribute to the 1-deoxy-D-xylulose 5-phosphate site. Glu150 contributes to the Mn(2+) binding site. Residue Gly203 coordinates NADPH. 1-deoxy-D-xylulose 5-phosphate-binding residues include Ser210, Asn215, Lys216, and Glu219. Glu219 is a Mn(2+) binding site.

This sequence belongs to the DXR family. Requires Mg(2+) as cofactor. It depends on Mn(2+) as a cofactor.

The catalysed reaction is 2-C-methyl-D-erythritol 4-phosphate + NADP(+) = 1-deoxy-D-xylulose 5-phosphate + NADPH + H(+). It functions in the pathway isoprenoid biosynthesis; isopentenyl diphosphate biosynthesis via DXP pathway; isopentenyl diphosphate from 1-deoxy-D-xylulose 5-phosphate: step 1/6. Catalyzes the NADPH-dependent rearrangement and reduction of 1-deoxy-D-xylulose-5-phosphate (DXP) to 2-C-methyl-D-erythritol 4-phosphate (MEP). This chain is 1-deoxy-D-xylulose 5-phosphate reductoisomerase, found in Chlorobaculum tepidum (strain ATCC 49652 / DSM 12025 / NBRC 103806 / TLS) (Chlorobium tepidum).